The primary structure comprises 240 residues: tRNA (guanine-N(1)-)-methyltransferase (240 aa).

S-adenosyl-L-methionine is bound by residues Gly110 and 129-134; that span reads LGDFVL.

It belongs to the RNA methyltransferase TrmD family. In terms of assembly, homodimer.

The protein resides in the cytoplasm. The enzyme catalyses guanosine(37) in tRNA + S-adenosyl-L-methionine = N(1)-methylguanosine(37) in tRNA + S-adenosyl-L-homocysteine + H(+). In terms of biological role, specifically methylates guanosine-37 in various tRNAs. The protein is tRNA (guanine-N(1)-)-methyltransferase of Clostridium botulinum (strain Kyoto / Type A2).